Here is a 520-residue protein sequence, read N- to C-terminus: Poly(A)-specific ribonuclease PNLDC1 (520 aa).

Residues Asp17, Glu19, Asp260, and Asp354 each coordinate Mg(2+). A helical membrane pass occupies residues Cys497 to Phe513.

Belongs to the CAF1 family. It depends on Mg(2+) as a cofactor.

It is found in the endoplasmic reticulum membrane. It catalyses the reaction Exonucleolytic cleavage of poly(A) to 5'-AMP.. Its function is as follows. 3'-exoribonuclease that has a preference for poly(A) tails of mRNAs, thereby efficiently degrading poly(A) tails. Exonucleolytic degradation of the poly(A) tail is often the first step in the decay of eukaryotic mRNAs and is also used to silence certain maternal mRNAs translationally during oocyte maturation and early embryonic development. May act as a regulator of multipotency in embryonic stem cells. Is a critical factor for proper spermatogenesis, involved in pre-piRNAs processing to generate mature piRNAs. The sequence is that of Poly(A)-specific ribonuclease PNLDC1 from Pongo abelii (Sumatran orangutan).